The following is a 296-amino-acid chain: 33 kDa chaperonin (296 aa).

Intrachain disulfides connect Cys-237/Cys-239 and Cys-270/Cys-273.

The protein belongs to the HSP33 family. In terms of processing, under oxidizing conditions two disulfide bonds are formed involving the reactive cysteines. Under reducing conditions zinc is bound to the reactive cysteines and the protein is inactive.

It localises to the cytoplasm. Functionally, redox regulated molecular chaperone. Protects both thermally unfolding and oxidatively damaged proteins from irreversible aggregation. Plays an important role in the bacterial defense system toward oxidative stress. This Acetivibrio thermocellus (strain ATCC 27405 / DSM 1237 / JCM 9322 / NBRC 103400 / NCIMB 10682 / NRRL B-4536 / VPI 7372) (Clostridium thermocellum) protein is 33 kDa chaperonin.